The chain runs to 286 residues: ATP synthase gamma chain (286 aa).

It belongs to the ATPase gamma chain family. As to quaternary structure, F-type ATPases have 2 components, CF(1) - the catalytic core - and CF(0) - the membrane proton channel. CF(1) has five subunits: alpha(3), beta(3), gamma(1), delta(1), epsilon(1). CF(0) has three main subunits: a, b and c.

The protein localises to the cell membrane. Produces ATP from ADP in the presence of a proton gradient across the membrane. The gamma chain is believed to be important in regulating ATPase activity and the flow of protons through the CF(0) complex. This chain is ATP synthase gamma chain, found in Ruminococcus albus (strain ATCC 27210 / DSM 20455 / JCM 14654 / NCDO 2250 / 7).